The sequence spans 375 residues: Pulmonary surfactant-associated protein D (375 aa).

Residues 1–21 (MLLFLLSALVLLTQSLGYLEA) form the signal peptide. S-nitrosocysteine occurs at positions 35 and 40. A disordered region spans residues 43–221 (VESGLPGRDG…DKGAKGESGL (179 aa)). The Collagen-like domain maps to 46–222 (GLPGRDGRDG…KGAKGESGLP (177 aa)). A compositionally biased stretch (basic and acidic residues) spans 50–65 (RDGRDGREGPRGEKGD). Position 78 is a 4-hydroxyproline (Pro78). Residue Lys87 is modified to 5-hydroxylysine. N-linked (GlcNAc...) asparagine glycosylation occurs at Asn90. A 4-hydroxyproline modification is found at Pro96. Lys99 is modified (5-hydroxylysine). The span at 105–114 (SGPPGPPGVP) shows a compositional bias: pro residues. Composition is skewed to low complexity over residues 116-132 (PAGR…IGPQ) and 138-150 (KGEA…VGAP). A 4-hydroxyproline mark is found at Pro171 and Pro177. Over residues 173–189 (ERGAPGNAGAAGSAGVM) the composition is skewed to low complexity. The segment covering 204-216 (KGDKGVPGDKGAK) has biased composition (basic and acidic residues). Positions 223-251 (DVASLRQQVEALQKQVQHLQAAFSQYKKV) form a coiled coil. The 115-residue stretch at 260-374 (VGEKIFKTAG…CGEKRLVVCE (115 aa)) folds into the C-type lectin domain. Disulfide bonds link Cys281-Cys373 and Cys351-Cys365.

The protein belongs to the SFTPD family. As to quaternary structure, oligomeric complex of 4 set of homotrimers. Post-translationally, hydroxylation on proline residues within the sequence motif, GXPG, is most likely to be 4-hydroxy as this fits the requirement for 4-hydroxylation in vertebrates. S-nitrosylation at Cys-35 and Cys-40 alters the quaternary structure which results in a pro-inflammatory chemoattractive signaling activity with macrophages.

Its subcellular location is the secreted. The protein resides in the extracellular space. The protein localises to the extracellular matrix. It is found in the surface film. Contributes to the lung's defense against inhaled microorganisms, organic antigens and toxins. Interacts with compounds such as bacterial lipopolysaccharides, oligosaccharides and fatty acids and modulates leukocyte action in immune response. May participate in the extracellular reorganization or turnover of pulmonary surfactant. Binds strongly maltose residues and to a lesser extent other alpha-glucosyl moieties. The protein is Pulmonary surfactant-associated protein D (SFTPD) of Macaca mulatta (Rhesus macaque).